The following is a 320-amino-acid chain: Cytochrome c biogenesis protein CcsA (320 aa).

The next 8 helical transmembrane spans lie at 9–29 (ILIH…FLTL), 44–64 (GMIV…IYSG), 71–91 (LYES…VCYF), 99–119 (LNAI…SGLL), 144–164 (MVLG…LLVI), 226–246 (IISL…VWAN), 261–281 (WAFI…NINL), and 287–307 (AIVA…VNLL).

It belongs to the CcmF/CycK/Ccl1/NrfE/CcsA family. As to quaternary structure, may interact with Ccs1.

It is found in the plastid. It localises to the chloroplast thylakoid membrane. Required during biogenesis of c-type cytochromes (cytochrome c6 and cytochrome f) at the step of heme attachment. In Carica papaya (Papaya), this protein is Cytochrome c biogenesis protein CcsA.